Consider the following 71-residue polypeptide: Small ribosomal subunit protein bS21 (71 aa).

The disordered stretch occupies residues 40 to 71 (KPTQERKRKAAAAVKRNIRRTSRDVTKRKRLY). Basic residues predominate over residues 45-71 (RKRKAAAAVKRNIRRTSRDVTKRKRLY).

The protein belongs to the bacterial ribosomal protein bS21 family.

The protein is Small ribosomal subunit protein bS21 of Xylella fastidiosa (strain M23).